The following is a 679-amino-acid chain: Enzymatic polyprotein (679 aa).

Positions 40–130 (LHCFVDTGAS…LYEPFIQFTD (91 aa)) are protease. The active site involves Asp-45. In terms of domain architecture, Reverse transcriptase spans 272–452 (LKVIKPSKSP…KKINFLGLEI (181 aa)).

Belongs to the caulimoviridae enzymatic polyprotein family.

The catalysed reaction is DNA(n) + a 2'-deoxyribonucleoside 5'-triphosphate = DNA(n+1) + diphosphate. In terms of biological role, encodes for at least two polypeptides: protease (PR) and reverse transcriptase (RT). The protease processes the polyprotein in cis. Reverse transcriptase is multifunctional enzyme that converts the viral RNA genome into dsDNA in viral cytoplasmic capsids. This enzyme displays a DNA polymerase activity that can copy either DNA or RNA templates, and a ribonuclease H (RNase H) activity that cleaves the RNA strand of RNA-DNA heteroduplexes in a partially processive 3'- to 5'-endonucleasic mode. Neo-synthesized pregenomic RNA (pgRNA) are encapsidated, and reverse-transcribed inside the nucleocapsid. Partial (+)DNA is synthesized from the (-)DNA template and generates the relaxed circular DNA (RC-DNA) genome. After budding and infection, the RC-DNA migrates in the nucleus, and is converted into a plasmid-like covalently closed circular DNA (cccDNA). The chain is Enzymatic polyprotein from Cauliflower mosaic virus (strain BBC) (CaMV).